We begin with the raw amino-acid sequence, 102 residues long: Defensin (102 aa).

The first 25 residues, 1–25 (MKCATIVCTIAVVLAATLLNGSVQA), serve as a signal peptide directing secretion. The propeptide occupies 26–62 (APQEEAALSGGANLNTLLDELPEETHHAALENYRAKR). 3 disulfides stabilise this stretch: Cys-65-Cys-92, Cys-78-Cys-98, and Cys-82-Cys-100.

It belongs to the invertebrate defensin family. Type 1 subfamily.

Its subcellular location is the secreted. Responsible for the anti Gram-positive activity of immune hemolymph. In Anopheles gambiae (African malaria mosquito), this protein is Defensin (Def1).